A 247-amino-acid chain; its full sequence is Carboxy-S-adenosyl-L-methionine synthase (247 aa).

S-adenosyl-L-methionine is bound by residues Tyr38, 63–65, Asn131, and Arg198; that span reads GCS.

Belongs to the class I-like SAM-binding methyltransferase superfamily. Cx-SAM synthase family. Homodimer.

The catalysed reaction is prephenate + S-adenosyl-L-methionine = carboxy-S-adenosyl-L-methionine + 3-phenylpyruvate + H2O. Functionally, catalyzes the conversion of S-adenosyl-L-methionine (SAM) to carboxy-S-adenosyl-L-methionine (Cx-SAM). This chain is Carboxy-S-adenosyl-L-methionine synthase, found in Desulforapulum autotrophicum (strain ATCC 43914 / DSM 3382 / VKM B-1955 / HRM2) (Desulfobacterium autotrophicum).